The sequence spans 628 residues: Probable alpha-L-arabinofuranosidase A (628 aa).

Positions 1–25 (MVAFSALSGVSALSLLLCLVQHAHG) are cleaved as a signal peptide. N-linked (GlcNAc...) asparagine glycosylation is found at N36, N51, N74, N152, N171, N260, N359, and N493.

This sequence belongs to the glycosyl hydrolase 51 family.

The protein resides in the secreted. It carries out the reaction Hydrolysis of terminal non-reducing alpha-L-arabinofuranoside residues in alpha-L-arabinosides.. Its pathway is glycan metabolism; L-arabinan degradation. Its function is as follows. Alpha-L-arabinofuranosidase involved in the degradation of arabinoxylan, a major component of plant hemicellulose. Acts only on small linear 1,5-alpha-linked L-arabinofuranosyl oligosaccharides. The sequence is that of Probable alpha-L-arabinofuranosidase A (abfA) from Aspergillus awamori (Black koji mold).